The primary structure comprises 155 residues: Small ribosomal subunit protein uS7 (155 aa).

Belongs to the universal ribosomal protein uS7 family. In terms of assembly, part of the 30S ribosomal subunit. Contacts proteins S9 and S11.

One of the primary rRNA binding proteins, it binds directly to 16S rRNA where it nucleates assembly of the head domain of the 30S subunit. Is located at the subunit interface close to the decoding center, probably blocks exit of the E-site tRNA. This chain is Small ribosomal subunit protein uS7, found in Xanthomonas campestris pv. campestris (strain 8004).